Reading from the N-terminus, the 432-residue chain is 3-oxo-tetronate kinase (432 aa).

ATP-binding positions include histidine 155, serine 272, alanine 324, glycine 344, glutamate 348, 370–373 (GGET), and glycine 414.

It belongs to the four-carbon acid sugar kinase family.

The enzyme catalyses 3-dehydro-L-erythronate + ATP = 3-dehydro-4-O-phospho-L-erythronate + ADP + H(+). The catalysed reaction is 3-dehydro-D-erythronate + ATP = 3-dehydro-4-O-phospho-D-erythronate + ADP + H(+). In terms of biological role, catalyzes the ATP-dependent phosphorylation of 3-oxo-tetronate to 3-oxo-tetronate 4-phosphate. In Cupriavidus necator (strain ATCC 17699 / DSM 428 / KCTC 22496 / NCIMB 10442 / H16 / Stanier 337) (Ralstonia eutropha), this protein is 3-oxo-tetronate kinase.